Reading from the N-terminus, the 405-residue chain is Teichoic acid D-alanyltransferase (405 aa).

Residues 1–9 (MLNLQPYEN) lie on the Extracellular side of the membrane. Residues 10 to 29 (PQYFVYLIIALLPVIIGMFK) form a helical membrane-spanning segment. At 30 to 33 (GFRM) the chain is on the cytoplasmic side. A helical transmembrane segment spans residues 34–49 (HWYESIFSLVFLVLIF). Residues 50-53 (DADK) lie on the Extracellular side of the membrane. Residues 54–80 (WPQGKALLGYVVFNLLLVYAYFKYRTR) traverse the membrane as a helical segment. Topologically, residues 81–86 (EGSKNS) are cytoplasmic. The helical transmembrane segment at 87 to 111 (TAVFYLSVALGIAHVAVVKFTPLFQ) threads the bilayer. Residues 112–121 (HHGSILGFLG) lie on the Extracellular side of the membrane. The chain crosses the membrane as a helical span at residues 122 to 138 (ISYLTFRVVGTIMEIRD). At 139–145 (GSIKDLN) the chain is on the cytoplasmic side. The stretch at 146–175 (MWKFIQFLLFFPTISSGPIDRYRRFVKDYD) is an intramembrane region. The Cytoplasmic segment spans residues 176-179 (RVPD). A helical transmembrane segment spans residues 180 to 223 (PEHYAQLVTKAIHYLMLGFLYKFILGYIFGTLWLPSVEHMAMAS). At 224-232 (RGGAFLGLS) the chain is on the extracellular side. The chain crosses the membrane as a helical span at residues 233 to 264 (WPVVGVMYAYSGYLFFDFAGYSLFAVAISYLM). Residues 265 to 274 (GIETPMNFNK) are Cytoplasmic-facing. Residues 275–310 (PWSHITSRLLNRWQLSLSFWFRDYIYMRFVFFMMKH) lie within the membrane without spanning it. Residues 311-315 (KWIKS) lie on the Cytoplasmic side of the membrane. Residues 316 to 335 (RVWTAFVGYLVLFLIMGIWH) form a helical membrane-spanning segment. The active site involves His-335. At 336–338 (GET) the chain is on the extracellular side. The chain crosses the membrane as a helical span at residues 339 to 372 (WYYIVYGLFHAMLINLTDAWLRFKKKHKDFFPHN). At 373-378 (RATHYP) the chain is on the cytoplasmic side. A helical membrane pass occupies residues 379–399 (SPFSMTANAVCFSFLIFSGFL). Residues 400 to 405 (DKLWFH) are Extracellular-facing.

This sequence belongs to the membrane-bound acyltransferase family.

It localises to the cell membrane. The protein operates within cell wall biogenesis; lipoteichoic acid biosynthesis. Its function is as follows. O-acyltransferase that catalyzes D-alanylation of both teichoic acid and lipoteichoic acid (LTA). D-alanylation of LTA plays an important role in modulating the properties of the cell wall in Gram-positive bacteria, influencing the net charge of the cell wall. Catalyzes D-alanylation from DltC carrier protein. The chain is Teichoic acid D-alanyltransferase from Lacticaseibacillus rhamnosus (Lactobacillus rhamnosus).